The sequence spans 217 residues: 3,4-dihydroxy-2-butanone 4-phosphate synthase (217 aa).

Residues 37 to 38 (RE), Asp-42, 150 to 154 (RRGHT), and Glu-174 contribute to the D-ribulose 5-phosphate site. Glu-38 lines the Mg(2+) pocket. His-153 provides a ligand contact to Mg(2+).

The protein belongs to the DHBP synthase family. As to quaternary structure, homodimer. Mg(2+) is required as a cofactor. The cofactor is Mn(2+).

It catalyses the reaction D-ribulose 5-phosphate = (2S)-2-hydroxy-3-oxobutyl phosphate + formate + H(+). It functions in the pathway cofactor biosynthesis; riboflavin biosynthesis; 2-hydroxy-3-oxobutyl phosphate from D-ribulose 5-phosphate: step 1/1. In terms of biological role, catalyzes the conversion of D-ribulose 5-phosphate to formate and 3,4-dihydroxy-2-butanone 4-phosphate. The polypeptide is 3,4-dihydroxy-2-butanone 4-phosphate synthase (Desulforapulum autotrophicum (strain ATCC 43914 / DSM 3382 / VKM B-1955 / HRM2) (Desulfobacterium autotrophicum)).